A 944-amino-acid chain; its full sequence is MTSIAEKWQKEWEKAKIFEANPDRTRNKFFTTVAFPYPNSPFHLGHGRTYVTCDIYARYMRMKGYNVLFPMGFHYTGTPIIAMADDVAKGDKELIDIFKNIYEIPDNVISKLADPLFMANYFRDEIKKAMKEIGLSIDWRREFTTIDPEFSSFIVWQFNKLQEKGYIVRDTHPVGWCPVHHIPVGMHDTKGDMEPEIGEFVLIYFNSDLGILPAATLRPETVFGAIGIWVNPDVTYSIIELDGKKMIVSERAAFKLTFQFDNIKNLGSIKGSELTKYKAVNPITGKEIPIMAADFVDPNVATGIVMSVPAHAPFDYYYLKKNKQQDMQIVSVIQVEGQGDTLAKDLVEKTNPKNKDDLQKLTEQVYRIEYNKGKMKDVSSLVKPEFVNYFKSFIGLSVPEARQKVTEFLIEKGLGRKIYEIMNRPVYCRCGNEVVVKILKDQWFLDYGNPQWKALAKKLISNMKFIPPEIRKDFEFVTDWLQKRACARTRGLGTPLPWDKKWIIESLSDSTIYMAYYTISHKIRQYQLKPSQLTYDFWNYIMLGIGDIDKISSETGISKEIIREMRNEFLYWYPLDIRHSGKDLIPNHLSFFIFNHAAIFPEELWPKAIAVNGFVLYEGKKMSKSLRNIIPLRKALRIYSPDVVRIALTSTADMGSDVNFSDSYAKSVGEILRRYYEFIKELPKYDGEGSEFANNWLKAQVSSIVLSSTKNMDNIDFRSTINDILYSFDSYLREYIDMCKADGKEPNGKLLREVIETWIKLLAPFAPHFAEEIWHELGHTTFISLEKWPTAEESSEDLYYILIHEYHKRIIEDSQKIINYYYKGKPSIVKIYVAEQELMKVLREAVQILSNGGTLKQLMEKERPSDKKLANIIRKIYELAVELDDNMKKLILGYNINEREILELGTKYMSYKLGIPVEVYDVSKLDKSKYNKEALPLKPAIIVE.

A 'HIGH' region motif is present at residues 36–46; sequence PYPNSPFHLGH. The 'KMSKS' region signature appears at 621-625; that stretch reads KMSKS. Lysine 624 contacts ATP.

It belongs to the class-I aminoacyl-tRNA synthetase family.

The protein resides in the cytoplasm. It carries out the reaction tRNA(Leu) + L-leucine + ATP = L-leucyl-tRNA(Leu) + AMP + diphosphate. This is Leucine--tRNA ligase 2 from Sulfurisphaera tokodaii (strain DSM 16993 / JCM 10545 / NBRC 100140 / 7) (Sulfolobus tokodaii).